A 228-amino-acid polypeptide reads, in one-letter code: Transcription repressor OFP8 (228 aa).

3 stretches are compositionally biased toward low complexity: residues 1 to 14 (MSGRSSRRGSFSLR), 54 to 79 (ASSTSTTTAFTATTGGAGTATSTDSS), and 92 to 101 (EEPAAAQQEQ). 2 disordered regions span residues 1–21 (MSGRSSRRGSFSLRQPPVVDI) and 36–143 (SSSS…QLQE). Residues 107–120 (RRRRRQQRRRRRRA) are compositionally biased toward basic residues. The 60-residue stretch at 157 to 216 (VAVESAEPYEDFRESMVQMVVEKEIYAWDDLNDLLHQFLSLNSPRHHPLILHAFADLWTR) folds into the OVATE domain.

As to quaternary structure, interacts with GSK2. Post-translationally, phosphorylated on serine and threonine residues by GSK2. Dephosphorylated during response to brassinosteroid. Expressed in roots, stems, stem nodes, young leaves, leaf sheaths, lamina joints, young spikelets, inflorescences, stamens and ovaries, embryos and seeds.

The protein resides in the nucleus. It localises to the cytoplasm. Functionally, probable transcriptional repressor that regulates multiple aspects of plant growth and development, partly through brassinosteroid (BR) signaling pathway. Acts downstream of the kinase GSK2, a negative regulator of BR signaling. In Oryza sativa subsp. japonica (Rice), this protein is Transcription repressor OFP8.